The sequence spans 191 residues: Uridylate kinase (191 aa).

An ATP-binding site is contributed by 12 to 17; sequence GAGKGT. The interval 33–63 is NMP; it reads SAGDCLREEQNRPGSKYGNLIKEYIKDGKIV. A ribonucleoside 5'-phosphate is bound by residues R39, 61-63, 91-94, and Q98; these read KIV and GFPR. The tract at residues 128 to 138 is LID; it reads HRGKTSGRSDD. R129 contacts ATP. A ribonucleoside 5'-phosphate is bound by residues R135 and R146. An ATP-binding site is contributed by Q174.

The protein belongs to the adenylate kinase family. UMP-CMP kinase subfamily. Monomer. It depends on Mg(2+) as a cofactor.

The protein localises to the cytoplasm. It is found in the nucleus. The enzyme catalyses UMP + ATP = UDP + ADP. Its function is as follows. Catalyzes the phosphorylation of pyrimidine nucleoside monophosphates at the expense of ATP. Plays an important role in de novo pyrimidine nucleotide biosynthesis. Has preference for UMP and dUMP as phosphate acceptors, but can also use CMP, dCMP and AMP. The polypeptide is Uridylate kinase (Schizosaccharomyces pombe (strain 972 / ATCC 24843) (Fission yeast)).